The following is a 353-amino-acid chain: NADH-quinone oxidoreductase subunit H (353 aa).

9 helical membrane-spanning segments follow: residues 8–28 (LLVY…IFIW), 75–95 (GVFW…FAAI), 108–128 (IGIL…FMAG), 148–168 (VSYE…TGSL), 179–199 (VPFI…AMAE), 229–249 (LFYL…TTLF), 258–278 (LHPV…IIWV), 297–317 (FLLP…LIAP), and 319–339 (INTA…VLLF).

It belongs to the complex I subunit 1 family. In terms of assembly, NDH-1 is composed of 14 different subunits. Subunits NuoA, H, J, K, L, M, N constitute the membrane sector of the complex.

The protein resides in the cell membrane. It catalyses the reaction a quinone + NADH + 5 H(+)(in) = a quinol + NAD(+) + 4 H(+)(out). Its function is as follows. NDH-1 shuttles electrons from NADH, via FMN and iron-sulfur (Fe-S) centers, to quinones in the respiratory chain. The immediate electron acceptor for the enzyme in this species is believed to be ubiquinone. Couples the redox reaction to proton translocation (for every two electrons transferred, four hydrogen ions are translocated across the cytoplasmic membrane), and thus conserves the redox energy in a proton gradient. This subunit may bind ubiquinone. The chain is NADH-quinone oxidoreductase subunit H from Dehalococcoides mccartyi (strain CBDB1).